The following is a 426-amino-acid chain: L-cysteine:1D-myo-inositol 2-amino-2-deoxy-alpha-D-glucopyranoside ligase (426 aa).

Zn(2+) is bound at residue Cys45. Residues 45 to 48 (CGIT), Thr60, and 83 to 85 (NVT) each bind L-cysteinyl-5'-AMP. The short motif at 47–57 (ITPYDATHIGH) is the 'HIGH' region element. The 'ERGGDP' region motif lies at 199–204 (ERGGDP). L-cysteinyl-5'-AMP is bound at residue Trp239. Cys243 is a Zn(2+) binding site. Residue 261 to 263 (GSD) coordinates L-cysteinyl-5'-AMP. Zn(2+) is bound at residue His268. Residue Val294 coordinates L-cysteinyl-5'-AMP. A 'KMSKS' region motif is present at residues 300–304 (KMSKS).

Belongs to the class-I aminoacyl-tRNA synthetase family. MshC subfamily. Monomer. Zn(2+) is required as a cofactor.

It carries out the reaction 1D-myo-inositol 2-amino-2-deoxy-alpha-D-glucopyranoside + L-cysteine + ATP = 1D-myo-inositol 2-(L-cysteinylamino)-2-deoxy-alpha-D-glucopyranoside + AMP + diphosphate + H(+). Its function is as follows. Catalyzes the ATP-dependent condensation of GlcN-Ins and L-cysteine to form L-Cys-GlcN-Ins. This chain is L-cysteine:1D-myo-inositol 2-amino-2-deoxy-alpha-D-glucopyranoside ligase, found in Clavibacter michiganensis subsp. michiganensis (strain NCPPB 382).